Reading from the N-terminus, the 495-residue chain is Cytochrome P450 2B15 (495 aa).

S129 is modified (phosphoserine; by PKA). C437 is a binding site for heme.

This sequence belongs to the cytochrome P450 family. It depends on heme as a cofactor.

The protein localises to the endoplasmic reticulum membrane. It is found in the microsome membrane. It catalyses the reaction an organic molecule + reduced [NADPH--hemoprotein reductase] + O2 = an alcohol + oxidized [NADPH--hemoprotein reductase] + H2O + H(+). Its function is as follows. Cytochromes P450 are a group of heme-thiolate monooxygenases. In liver microsomes, this enzyme is involved in an NADPH-dependent electron transport pathway. It oxidizes a variety of structurally unrelated compounds, including steroids, fatty acids, and xenobiotics. This is Cytochrome P450 2B15 (Cyp2b15) from Rattus norvegicus (Rat).